A 429-amino-acid chain; its full sequence is 3-isopropylmalate dehydratase large subunit (429 aa).

3 residues coordinate [4Fe-4S] cluster: Cys303, Cys363, and Cys366.

This sequence belongs to the aconitase/IPM isomerase family. LeuC type 2 subfamily. Heterodimer of LeuC and LeuD. [4Fe-4S] cluster serves as cofactor.

It carries out the reaction (2R,3S)-3-isopropylmalate = (2S)-2-isopropylmalate. The protein operates within amino-acid biosynthesis; L-leucine biosynthesis; L-leucine from 3-methyl-2-oxobutanoate: step 2/4. Catalyzes the isomerization between 2-isopropylmalate and 3-isopropylmalate, via the formation of 2-isopropylmaleate. The protein is 3-isopropylmalate dehydratase large subunit of Caldicellulosiruptor saccharolyticus (strain ATCC 43494 / DSM 8903 / Tp8T 6331).